A 440-amino-acid chain; its full sequence is Trigger factor (440 aa).

One can recognise a PPIase FKBP-type domain in the interval 163-248; sequence GMVLTVDFSF…LKEIKKKELP (86 aa).

Belongs to the FKBP-type PPIase family. Tig subfamily.

The protein localises to the cytoplasm. It carries out the reaction [protein]-peptidylproline (omega=180) = [protein]-peptidylproline (omega=0). Functionally, involved in protein export. Acts as a chaperone by maintaining the newly synthesized protein in an open conformation. Functions as a peptidyl-prolyl cis-trans isomerase. The sequence is that of Trigger factor from Trichlorobacter lovleyi (strain ATCC BAA-1151 / DSM 17278 / SZ) (Geobacter lovleyi).